The chain runs to 363 residues: Flagellar P-ring protein (363 aa).

The signal sequence occupies residues 1–20; the sequence is MKYKLVLAVAVLVFSLPSQA.

Belongs to the FlgI family. In terms of assembly, the basal body constitutes a major portion of the flagellar organelle and consists of four rings (L,P,S, and M) mounted on a central rod.

Its subcellular location is the periplasm. The protein localises to the bacterial flagellum basal body. Assembles around the rod to form the L-ring and probably protects the motor/basal body from shearing forces during rotation. The protein is Flagellar P-ring protein of Shewanella baltica (strain OS223).